An 88-amino-acid chain; its full sequence is UPF0335 protein Mnod_5968 (88 aa).

Belongs to the UPF0335 family.

This Methylobacterium nodulans (strain LMG 21967 / CNCM I-2342 / ORS 2060) protein is UPF0335 protein Mnod_5968.